The primary structure comprises 223 residues: uncharacterized protein (223 aa).

Its subcellular location is the plastid. It localises to the chloroplast. This is an uncharacterized protein from Mesostigma viride (Green alga).